We begin with the raw amino-acid sequence, 191 residues long: Elongation factor P (191 aa).

This sequence belongs to the elongation factor P family.

It is found in the cytoplasm. It participates in protein biosynthesis; polypeptide chain elongation. Its function is as follows. Involved in peptide bond synthesis. Stimulates efficient translation and peptide-bond synthesis on native or reconstituted 70S ribosomes in vitro. Probably functions indirectly by altering the affinity of the ribosome for aminoacyl-tRNA, thus increasing their reactivity as acceptors for peptidyl transferase. This chain is Elongation factor P, found in Janthinobacterium sp. (strain Marseille) (Minibacterium massiliensis).